We begin with the raw amino-acid sequence, 525 residues long: NAD(P)H-quinone oxidoreductase chain 4-2 (525 aa).

The next 14 helical transmembrane spans lie at 6-26 (FPWL…IPII), 36-56 (WYAL…FYTS), 91-111 (LIIL…PVTL), 115-135 (LFYF…AVQD), 137-157 (LLFF…LAIW), 169-189 (FILY…TMAF), 212-232 (LLLY…IPLH), 243-263 (TAPA…YALI), 277-297 (FAPV…LTSF), 314-334 (MGFV…GAVL), 335-355 (QMVS…ATYD), 375-397 (IFAM…GFVA), 417-437 (VIVV…LLSM), and 464-484 (VFVI…PKLL).

This sequence belongs to the complex I subunit 4 family.

The protein localises to the cellular thylakoid membrane. It catalyses the reaction a plastoquinone + NADH + (n+1) H(+)(in) = a plastoquinol + NAD(+) + n H(+)(out). It carries out the reaction a plastoquinone + NADPH + (n+1) H(+)(in) = a plastoquinol + NADP(+) + n H(+)(out). Its function is as follows. NDH-1 shuttles electrons from NAD(P)H, via FMN and iron-sulfur (Fe-S) centers, to quinones in the respiratory chain. The immediate electron acceptor for the enzyme in this species is believed to be plastoquinone. Couples the redox reaction to proton translocation (for every two electrons transferred, four hydrogen ions are translocated across the cytoplasmic membrane), and thus conserves the redox energy in a proton gradient. The protein is NAD(P)H-quinone oxidoreductase chain 4-2 (ndhD2) of Nostoc sp. (strain PCC 7120 / SAG 25.82 / UTEX 2576).